The sequence spans 539 residues: Berberine bridge enzyme-like 21 (539 aa).

Residues methionine 1–alanine 26 form the signal peptide. The cysteines at positions 41 and 104 are disulfide-linked. Residue asparagine 79 is glycosylated (N-linked (GlcNAc...) asparagine). The region spanning serine 82 to valine 256 is the FAD-binding PCMH-type domain. Positions histidine 119 to cysteine 181 form a cross-link, 6-(S-cysteinyl)-8alpha-(pros-histidyl)-FAD (His-Cys). Residue asparagine 340 is glycosylated (N-linked (GlcNAc...) asparagine).

Belongs to the oxygen-dependent FAD-linked oxidoreductase family. Requires FAD as cofactor. Post-translationally, the FAD cofactor is bound via a bicovalent 6-S-cysteinyl, 8alpha-N1-histidyl FAD linkage.

It localises to the secreted. The protein resides in the cell wall. In Arabidopsis thaliana (Mouse-ear cress), this protein is Berberine bridge enzyme-like 21.